The chain runs to 427 residues: Enolase (427 aa).

Residue glutamine 163 coordinates (2R)-2-phosphoglycerate. Catalysis depends on glutamate 205, which acts as the Proton donor. Positions 242, 288, and 315 each coordinate Mg(2+). Lysine 340, arginine 369, serine 370, and lysine 391 together coordinate (2R)-2-phosphoglycerate. Lysine 340 functions as the Proton acceptor in the catalytic mechanism.

It belongs to the enolase family. Mg(2+) serves as cofactor.

It is found in the cytoplasm. Its subcellular location is the secreted. It localises to the cell surface. The enzyme catalyses (2R)-2-phosphoglycerate = phosphoenolpyruvate + H2O. It participates in carbohydrate degradation; glycolysis; pyruvate from D-glyceraldehyde 3-phosphate: step 4/5. Catalyzes the reversible conversion of 2-phosphoglycerate (2-PG) into phosphoenolpyruvate (PEP). It is essential for the degradation of carbohydrates via glycolysis. This is Enolase from Cytophaga hutchinsonii (strain ATCC 33406 / DSM 1761 / CIP 103989 / NBRC 15051 / NCIMB 9469 / D465).